The following is a 229-amino-acid chain: Putative ABC transporter permease protein ORF1 (229 aa).

An ABC transmembrane type-1 domain is found at 23-214 (ALNSLLVALA…LPSLAFFALV (192 aa)). 5 helical membrane-spanning segments follow: residues 27 to 47 (LLVA…MAYV), 62 to 82 (WVVV…FLVL), 91 to 111 (LTGL…WMLA), 150 to 170 (ATAL…LVLL), and 194 to 214 (SPAG…FALV).

It belongs to the binding-protein-dependent transport system permease family. MalFG subfamily.

It localises to the cell membrane. In terms of biological role, may participate in oleandomycin secretion during antibiotic production. This Streptomyces antibioticus protein is Putative ABC transporter permease protein ORF1.